The following is a 132-amino-acid chain: Small ribosomal subunit protein uS8 (132 aa).

This sequence belongs to the universal ribosomal protein uS8 family. Part of the 30S ribosomal subunit. Contacts proteins S5 and S12.

In terms of biological role, one of the primary rRNA binding proteins, it binds directly to 16S rRNA central domain where it helps coordinate assembly of the platform of the 30S subunit. This chain is Small ribosomal subunit protein uS8, found in Francisella philomiragia subsp. philomiragia (strain ATCC 25017 / CCUG 19701 / FSC 153 / O#319-036).